The primary structure comprises 336 residues: Secreted effector protein SifA (336 aa).

The interval 1 to 330 is interaction with host PLEKHM2; sequence MPITIGNGFL…LHVRSEQQSG (330 aa).

This sequence belongs to the Sif family. Interacts with host PLEKHM2. Interacts with SseJ; the interaction is indirect.

The protein localises to the secreted. Its subcellular location is the host cytoplasm. It localises to the host cell membrane. Its function is as follows. Effector proteins function to alter host cell physiology and promote bacterial survival in host tissues. This protein is required for endosomal tubulation and formation of Salmonella-induced filaments (Sifs), which are filamentous structures containing lysosomal membrane glycoproteins within epithelial cells. Sif formation is concomitant with intracellular bacterial replication. This chain is Secreted effector protein SifA (sifA), found in Salmonella typhimurium (strain LT2 / SGSC1412 / ATCC 700720).